Consider the following 188-residue polypeptide: Putative manganese efflux pump MntP (188 aa).

6 helical membrane-spanning segments follow: residues Phe-3–Ala-23, Ile-35–Val-55, Phe-63–Met-83, Val-107–Met-127, Ile-131–Ala-151, and Ala-167–Ile-187.

This sequence belongs to the MntP (TC 9.B.29) family.

Its subcellular location is the cell inner membrane. Its function is as follows. Probably functions as a manganese efflux pump. The protein is Putative manganese efflux pump MntP of Neisseria meningitidis serogroup A / serotype 4A (strain DSM 15465 / Z2491).